Reading from the N-terminus, the 148-residue chain is uncharacterized protein (148 aa).

This is an uncharacterized protein from Saccharomyces cerevisiae (strain ATCC 204508 / S288c) (Baker's yeast).